We begin with the raw amino-acid sequence, 75 residues long: Protease B inhibitor 2 (75 aa).

Position 74 is a phosphothreonine (Thr74).

It belongs to the protease inhibitor I9 family. Part of the heterodimeric LMA1 complex together with the thioredoxin II/TRX2. LMA1 binds to the ATPase SEC18.

The protein localises to the cytoplasm. Functionally, cytosolic inhibitor of vacuolar proteinase B (yscB), probably regulating protease B activity during limited proteolysis. PBI2 is a component of the LMA1 complex, which is involved in the facilitation of vesicle fusion such as homotypic vacuole and ER-derived COPII vesicle fusion with the Golgi. The chain is Protease B inhibitor 2 (PBI2) from Saccharomyces cerevisiae (strain ATCC 204508 / S288c) (Baker's yeast).